Consider the following 131-residue polypeptide: Actin-associated protein FAM107A (131 aa).

A coiled-coil region spans residues 57–77 (VLEHRRRNQLIKKKEEELEAK). The Nuclear localization signal motif lies at 61–71 (RRRNQLIKKKE).

In terms of assembly, interacts with ACTB. Interacts with COMMD1; this interaction stabilizes COMMD1 in the nucleus. Interacts with MAP1A. Interacts with PRDX1. Interacts with F-actin.

Its subcellular location is the nucleus. It localises to the cytoplasm. It is found in the cytoskeleton. The protein resides in the stress fiber. The protein localises to the cell junction. Its subcellular location is the focal adhesion. It localises to the cell projection. It is found in the ruffle membrane. The protein resides in the synapse. Its function is as follows. Stress-inducible actin-binding protein that plays a role in synaptic and cognitive functions by modulating actin filamentous (F-actin) dynamics. Mediates polymerization of globular actin to F-actin. Also binds to, stabilizes and bundles F-actin. Involved in synaptic function by regulating neurite outgrowth in an actin-dependent manner and for the acquisition of hippocampus-dependent cognitive function, such as learning and long-term memory. Plays a role in the actin and microtubule cytoskeleton organization; negatively regulates focal adhesion (FA) assembly promoting malignant glial cell migration in an actin-, microtubule- and MAP1A-dependent manner. Also involved in neuroblastoma G1/S phase cell cycle progression and cell proliferation inhibition by stimulating ubiquitination of NF-kappa-B subunit RELA and NF-kappa-B degradation in a COMMD1- and actin-dependent manner. May play a role in tumor development. This is Actin-associated protein FAM107A from Rattus norvegicus (Rat).